Here is a 476-residue protein sequence, read N- to C-terminus: MTANVLFPLFANLHDRAVLVVGGGKVAERKTEALLKVGALPIIGAPSLTASLQHWAETGRITWRQGTFENSWLQEDIWLVIAATDQPEVNHAAARAAHAQRLFVNVVDDIALSNVQVPAVVERGPLRIAISSGGGAPMVARYLRQQLESLIDDSWGRLTTLFAQRRDTIRARYPNIEARRRFFETQLTGPLQRLLRKQRHAEAEAVLEAALAETPPTGSGSVTLVGAGAGDAGLLTLNALRALNEADIILYDRLVSDTVLQVARRDAEQIEVGKSATGHSVRQEDIHSLMLQHARAGQRVVRLKGGDPFVFGRGGEELEFLRTHNIPYEVIPGITAALACAAYAGIPLTHRDHAQSLCLITAHCQSSLDTLDWAALAQERQTLAFYMGVAGLPTIQQRLCEAGRAETTPFALIENGARAQQRVLTGTLKTLAHTAQTYAVRPPALLILGEVTTLAEHLHWFGTAPLSAPCPPALIL.

Positions 1–207 (MTANVLFPLF…QRHAEAEAVL (207 aa)) are precorrin-2 dehydrogenase /sirohydrochlorin ferrochelatase. Residues 25–26 (KV) and 46–47 (PS) each bind NAD(+). Ser132 carries the phosphoserine modification. Residues 220 to 476 (GSVTLVGAGA…SAPCPPALIL (257 aa)) form a uroporphyrinogen-III C-methyltransferase region. The active-site Proton acceptor is the Asp252. Lys274 functions as the Proton donor in the catalytic mechanism. S-adenosyl-L-methionine contacts are provided by residues 305–307 (GGD), Val310, 335–336 (TA), Met387, and Gly416.

The protein in the N-terminal section; belongs to the precorrin-2 dehydrogenase / sirohydrochlorin ferrochelatase family. This sequence in the C-terminal section; belongs to the precorrin methyltransferase family.

The enzyme catalyses uroporphyrinogen III + 2 S-adenosyl-L-methionine = precorrin-2 + 2 S-adenosyl-L-homocysteine + H(+). The catalysed reaction is precorrin-2 + NAD(+) = sirohydrochlorin + NADH + 2 H(+). It carries out the reaction siroheme + 2 H(+) = sirohydrochlorin + Fe(2+). It functions in the pathway cofactor biosynthesis; adenosylcobalamin biosynthesis; precorrin-2 from uroporphyrinogen III: step 1/1. It participates in cofactor biosynthesis; adenosylcobalamin biosynthesis; sirohydrochlorin from precorrin-2: step 1/1. Its pathway is porphyrin-containing compound metabolism; siroheme biosynthesis; precorrin-2 from uroporphyrinogen III: step 1/1. The protein operates within porphyrin-containing compound metabolism; siroheme biosynthesis; siroheme from sirohydrochlorin: step 1/1. It functions in the pathway porphyrin-containing compound metabolism; siroheme biosynthesis; sirohydrochlorin from precorrin-2: step 1/1. Multifunctional enzyme that catalyzes the SAM-dependent methylations of uroporphyrinogen III at position C-2 and C-7 to form precorrin-2 via precorrin-1. Then it catalyzes the NAD-dependent ring dehydrogenation of precorrin-2 to yield sirohydrochlorin. Finally, it catalyzes the ferrochelation of sirohydrochlorin to yield siroheme. This chain is Siroheme synthase, found in Xylella fastidiosa (strain 9a5c).